Here is a 563-residue protein sequence, read N- to C-terminus: Arginine--tRNA ligase (563 aa).

Residues 137–147 carry the 'HIGH' region motif; sequence ANPTGLLHMGN.

It belongs to the class-I aminoacyl-tRNA synthetase family. As to quaternary structure, monomer.

Its subcellular location is the cytoplasm. It catalyses the reaction tRNA(Arg) + L-arginine + ATP = L-arginyl-tRNA(Arg) + AMP + diphosphate. The sequence is that of Arginine--tRNA ligase from Desulforudis audaxviator (strain MP104C).